Reading from the N-terminus, the 263-residue chain is Palmitoyltransferase ZDHHC21 (263 aa).

Topologically, residues 1–4 (MKMR) are cytoplasmic. The helical transmembrane segment at 5–25 (LHFVVDPMGWFCMSMVFFVWI) threads the bilayer. The Extracellular portion of the chain corresponds to 26-44 (YNSFLIPKLVLLPHYAEGH). A helical membrane pass occupies residues 45–65 (ITAEPVICYYLASLLCFSALF). The Cytoplasmic portion of the chain corresponds to 66–131 (RASTTDPGKL…WINNCVGEDN (66 aa)). The 51-residue stretch at 90–140 (ELCNKCNMMRPKRSHHCSRCGHCVRRMDHHCPWINNCVGEDNHWLFLQLCF) folds into the DHHC domain. C120 (S-palmitoyl cysteine intermediate) is an active-site residue. Residues 132–152 (HWLFLQLCFYTQVLSFYTLVL) traverse the membrane as a helical segment. Residues 153-181 (DFCQYYYFLPLSSVDQADFAVHHELALLR) lie on the Extracellular side of the membrane. The helical transmembrane segment at 182 to 202 (VSCFMGLIMFGGISSLFYTQV) threads the bilayer. At 203–263 (KGILTDTTTI…KLNLTIRSHV (61 aa)) the chain is on the cytoplasmic side.

The protein belongs to the DHHC palmitoyltransferase family.

The protein localises to the golgi apparatus membrane. It localises to the golgi apparatus. It is found in the cis-Golgi network membrane. The protein resides in the cell membrane. The enzyme catalyses L-cysteinyl-[protein] + hexadecanoyl-CoA = S-hexadecanoyl-L-cysteinyl-[protein] + CoA. Palmitoyltransferase that catalyzes the addition of palmitate onto various protein substrates. This Danio rerio (Zebrafish) protein is Palmitoyltransferase ZDHHC21.